Here is a 183-residue protein sequence, read N- to C-terminus: Cuticle protein 2 (183 aa).

Residues 1-15 (MKLIVVAALIGVCAG) form the signal peptide. In terms of domain architecture, Chitin-binding type R&amp;R spans 58-121 (SQGFQYVYDT…AQGAHLPTPP (64 aa)).

The chain is Cuticle protein 2 from Lonomia obliqua (Moth).